The primary structure comprises 205 residues: Putative 3-methyladenine DNA glycosylase (205 aa).

The protein belongs to the DNA glycosylase MPG family.

The chain is Putative 3-methyladenine DNA glycosylase from Bacillus cereus (strain Q1).